We begin with the raw amino-acid sequence, 131 residues long: MSWQTYVDDHLMCEIEGNRLTSAAIIGQDGSVWAQSATFPQFKPEEITAIMNDFAEPGTLAPTGLYLGGTKYMVIQGEAGAVIRGKKGPGGITVKKTNQALIIGIYDEPMTPGQCNMIVERLGDYLIEQSL.

This sequence belongs to the profilin family. In terms of assembly, occurs in many kinds of cells as a complex with monomeric actin in a 1:1 ratio.

The protein localises to the cytoplasm. Its subcellular location is the cytoskeleton. Functionally, binds to actin and affects the structure of the cytoskeleton. At high concentrations, profilin prevents the polymerization of actin, whereas it enhances it at low concentrations. By binding to PIP2, it inhibits the formation of IP3 and DG. The protein is Profilin of Capsicum annuum (Capsicum pepper).